The following is a 177-amino-acid chain: MELNVFAGQEKSELSMIEVARAILEERGRDNEMYFNDLVNEIQNYLEKSNSEIRAALPTFYSDLNVDGSFIPLGENKWGLRSWYAIDEIDEEVITLEEDDEDAPKRKKKRVNAFMDGDDDAIDYGHDDPEDEDNYPGSVSSEYDDENPDDEKDEVESYDQKSTKLSQMTNWMKRMLI.

The HTH HARE-type domain occupies 14-83 (LSMIEVARAI…GENKWGLRSW (70 aa)). Acidic residues-rich tracts occupy residues 117 to 134 (GDDD…DEDN) and 142 to 157 (EYDD…EVES). The interval 117–164 (GDDDAIDYGHDDPEDEDNYPGSVSSEYDDENPDDEKDEVESYDQKSTK) is disordered.

It belongs to the RpoE family. As to quaternary structure, RNAP is composed of a core of 2 alpha, a beta and a beta' subunits. The core is associated with a delta subunit and one of several sigma factors.

Its function is as follows. Participates in both the initiation and recycling phases of transcription. In the presence of the delta subunit, RNAP displays an increased specificity of transcription, a decreased affinity for nucleic acids, and an increased efficiency of RNA synthesis because of enhanced recycling. This is Probable DNA-directed RNA polymerase subunit delta from Streptococcus suis (strain 98HAH33).